A 302-amino-acid polypeptide reads, in one-letter code: Late embryogenesis abundant protein D-29 (302 aa).

Disordered stretches follow at residues 25-93, 168-193, and 205-302; these read HMPS…AKEY, VKNA…LADS, and AKEK…NHKN. Basic and acidic residues-rich tracts occupy residues 34 to 70 and 79 to 93; these read RDYS…HAAN and AKDR…AKEY. Basic and acidic residues predominate over residues 205–286; that stretch reads AKEKVRDMAD…KAEETIESAK (82 aa).

It belongs to the LEA type 1 family.

Functionally, LEA protein are late embryonic proteins abundant in higher plant seed embryos. There are two subsets of LEA proteins (5a and 5b), the first ones are expressed when the cotyledon weight reach 80 mg and the second set are expressed above 100 mg. The function of those proteins is not known. The protein is Late embryogenesis abundant protein D-29 of Gossypium hirsutum (Upland cotton).